The primary structure comprises 630 residues: Mannosyl-oligosaccharide 1,2-alpha-mannosidase IC (630 aa).

Residues 1–22 (MLMRKVPGFVPASPWGLRLPQK) lie on the Cytoplasmic side of the membrane. A helical; Signal-anchor for type II membrane protein membrane pass occupies residues 23-43 (FLFLLFLSGLVTLCFGALFLL). Topologically, residues 44 to 630 (PHSSRLKRLF…DSSGRAWGRH (587 aa)) are lumenal. Positions 74–140 (PAREQEPPPN…ASRPGDEGVP (67 aa)) are disordered. Residues 80–89 (PPPNPAPAAP) are compositionally biased toward pro residues. Over residues 102-113 (PRRRKGGLRRTR) the composition is skewed to basic residues. Ser-164 carries the post-translational modification Phosphoserine. Asn-250 is a glycosylation site (N-linked (GlcNAc...) asparagine). A disulfide bridge links Cys-453 with Cys-485. Glu-499 (proton donor) is an active-site residue. Thr-610 is a Ca(2+) binding site. Residue Asn-618 is glycosylated (N-linked (GlcNAc...) asparagine).

The protein belongs to the glycosyl hydrolase 47 family. The cofactor is Ca(2+). In terms of tissue distribution, expressed in most tissues with the exception of lung, muscle and pancreas. Highly expressed in placenta.

It localises to the golgi apparatus membrane. The catalysed reaction is N(4)-(alpha-D-Man-(1-&gt;2)-alpha-D-Man-(1-&gt;2)-alpha-D-Man-(1-&gt;3)-[alpha-D-Man-(1-&gt;2)-alpha-D-Man-(1-&gt;3)-[alpha-D-Man-(1-&gt;2)-alpha-D-Man-(1-&gt;6)]-alpha-D-Man-(1-&gt;6)]-beta-D-Man-(1-&gt;4)-beta-D-GlcNAc-(1-&gt;4)-beta-D-GlcNAc)-L-asparaginyl-[protein] (N-glucan mannose isomer 9A1,2,3B1,2,3) + 4 H2O = N(4)-(alpha-D-Man-(1-&gt;3)-[alpha-D-Man-(1-&gt;3)-[alpha-D-Man-(1-&gt;6)]-alpha-D-Man-(1-&gt;6)]-beta-D-Man-(1-&gt;4)-beta-D-GlcNAc-(1-&gt;4)-beta-D-GlcNAc)-L-asparaginyl-[protein] (N-glucan mannose isomer 5A1,2) + 4 beta-D-mannose. The enzyme catalyses N(4)-(alpha-D-Man-(1-&gt;2)-alpha-D-Man-(1-&gt;2)-alpha-D-Man-(1-&gt;3)-[alpha-D-Man-(1-&gt;3)-[alpha-D-Man-(1-&gt;2)-alpha-D-Man-(1-&gt;6)]-alpha-D-Man-(1-&gt;6)]-beta-D-Man-(1-&gt;4)-beta-D-GlcNAc-(1-&gt;4)-beta-D-GlcNAc)-L-asparaginyl-[protein] (N-glucan mannose isomer 8A1,2,3B1,3) + 3 H2O = N(4)-(alpha-D-Man-(1-&gt;3)-[alpha-D-Man-(1-&gt;3)-[alpha-D-Man-(1-&gt;6)]-alpha-D-Man-(1-&gt;6)]-beta-D-Man-(1-&gt;4)-beta-D-GlcNAc-(1-&gt;4)-beta-D-GlcNAc)-L-asparaginyl-[protein] (N-glucan mannose isomer 5A1,2) + 3 beta-D-mannose. It functions in the pathway protein modification; protein glycosylation. Inhibited by both 1-deoxymannojirimycin and kifunensine. Its function is as follows. Involved in the maturation of Asn-linked oligosaccharides. Trim alpha-1,2-linked mannose residues from Man(9)GlcNAc(2) to produce first Man(8)GlcNAc(2) then Man(6)GlcNAc and a small amount of Man(5)GlcNAc. The chain is Mannosyl-oligosaccharide 1,2-alpha-mannosidase IC (MAN1C1) from Homo sapiens (Human).